A 227-amino-acid chain; its full sequence is MGYQLFEFENLKDCHKALTERFKEFFNTALKKHHQISIAFSGGRSPISLLQKLSVLNLKWHECLISLVDERIIDTSHDDSNTKLLHDYLLQNNALKASFIPLLPEKISSDTNALFNFANQHFKQPHLAILGMGTDGHTASLFPETSAFLNEEKENIVLTKPINAPYERLSMSVNALENCEKLFLSISGVEKRGVLEKALKENAPYSLPIARILHSQKVTTEVFYAKN.

Belongs to the glucosamine/galactosamine-6-phosphate isomerase family. 6-phosphogluconolactonase subfamily.

The catalysed reaction is 6-phospho-D-glucono-1,5-lactone + H2O = 6-phospho-D-gluconate + H(+). Its pathway is carbohydrate degradation; pentose phosphate pathway; D-ribulose 5-phosphate from D-glucose 6-phosphate (oxidative stage): step 2/3. In terms of biological role, hydrolysis of 6-phosphogluconolactone to 6-phosphogluconate. The chain is 6-phosphogluconolactonase (pgl) from Helicobacter pylori (strain ATCC 700392 / 26695) (Campylobacter pylori).